A 262-amino-acid polypeptide reads, in one-letter code: Acyl-[acyl-carrier-protein]--UDP-N-acetylglucosamine O-acyltransferase (262 aa).

The protein belongs to the transferase hexapeptide repeat family. LpxA subfamily. Homotrimer.

The protein resides in the cytoplasm. It carries out the reaction a (3R)-hydroxyacyl-[ACP] + UDP-N-acetyl-alpha-D-glucosamine = a UDP-3-O-[(3R)-3-hydroxyacyl]-N-acetyl-alpha-D-glucosamine + holo-[ACP]. It participates in glycolipid biosynthesis; lipid IV(A) biosynthesis; lipid IV(A) from (3R)-3-hydroxytetradecanoyl-[acyl-carrier-protein] and UDP-N-acetyl-alpha-D-glucosamine: step 1/6. In terms of biological role, involved in the biosynthesis of lipid A, a phosphorylated glycolipid that anchors the lipopolysaccharide to the outer membrane of the cell. The sequence is that of Acyl-[acyl-carrier-protein]--UDP-N-acetylglucosamine O-acyltransferase from Burkholderia ambifaria (strain MC40-6).